We begin with the raw amino-acid sequence, 202 residues long: Large ribosomal subunit protein bL25 (202 aa).

This sequence belongs to the bacterial ribosomal protein bL25 family. CTC subfamily. Part of the 50S ribosomal subunit; part of the 5S rRNA/L5/L18/L25 subcomplex. Contacts the 5S rRNA. Binds to the 5S rRNA independently of L5 and L18.

This is one of the proteins that binds to the 5S RNA in the ribosome where it forms part of the central protuberance. The chain is Large ribosomal subunit protein bL25 from Methylococcus capsulatus (strain ATCC 33009 / NCIMB 11132 / Bath).